We begin with the raw amino-acid sequence, 259 residues long: 7-cyano-7-deazaguanine synthase (259 aa).

ATP is bound at residue Leu-32–Leu-42. Positions 223, 233, 236, and 239 each coordinate Zn(2+).

This sequence belongs to the QueC family. Requires Zn(2+) as cofactor.

The enzyme catalyses 7-carboxy-7-deazaguanine + NH4(+) + ATP = 7-cyano-7-deazaguanine + ADP + phosphate + H2O + H(+). Its pathway is purine metabolism; 7-cyano-7-deazaguanine biosynthesis. Catalyzes the ATP-dependent conversion of 7-carboxy-7-deazaguanine (CDG) to 7-cyano-7-deazaguanine (preQ(0)). This is 7-cyano-7-deazaguanine synthase from Psychrobacter arcticus (strain DSM 17307 / VKM B-2377 / 273-4).